The primary structure comprises 218 residues: Pyridoxine/pyridoxamine 5'-phosphate oxidase (218 aa).

Substrate is bound by residues 14–17 (RREY) and Lys72. FMN contacts are provided by residues 67 to 72 (RIVLLK), 82 to 83 (YT), Arg88, Lys89, and Gln111. 3 residues coordinate substrate: Tyr129, Arg133, and Ser137. Residues 146 to 147 (QS) and Trp191 contribute to the FMN site. Residue 197–199 (RLH) participates in substrate binding. Arg201 contacts FMN.

This sequence belongs to the pyridoxamine 5'-phosphate oxidase family. In terms of assembly, homodimer. Requires FMN as cofactor.

The enzyme catalyses pyridoxamine 5'-phosphate + O2 + H2O = pyridoxal 5'-phosphate + H2O2 + NH4(+). It carries out the reaction pyridoxine 5'-phosphate + O2 = pyridoxal 5'-phosphate + H2O2. The protein operates within cofactor metabolism; pyridoxal 5'-phosphate salvage; pyridoxal 5'-phosphate from pyridoxamine 5'-phosphate: step 1/1. Its pathway is cofactor metabolism; pyridoxal 5'-phosphate salvage; pyridoxal 5'-phosphate from pyridoxine 5'-phosphate: step 1/1. Its function is as follows. Catalyzes the oxidation of either pyridoxine 5'-phosphate (PNP) or pyridoxamine 5'-phosphate (PMP) into pyridoxal 5'-phosphate (PLP). The protein is Pyridoxine/pyridoxamine 5'-phosphate oxidase of Escherichia coli O127:H6 (strain E2348/69 / EPEC).